Here is a 308-residue protein sequence, read N- to C-terminus: Probable 5-dehydro-4-deoxyglucarate dehydratase (308 aa).

The protein belongs to the DapA family.

It catalyses the reaction 5-dehydro-4-deoxy-D-glucarate + H(+) = 2,5-dioxopentanoate + CO2 + H2O. The protein operates within carbohydrate acid metabolism; D-glucarate degradation; 2,5-dioxopentanoate from D-glucarate: step 2/2. The chain is Probable 5-dehydro-4-deoxyglucarate dehydratase from Oceanobacillus iheyensis (strain DSM 14371 / CIP 107618 / JCM 11309 / KCTC 3954 / HTE831).